The chain runs to 282 residues: Probable endonuclease 4 (282 aa).

Residues H69, H109, E145, D179, H182, H216, D229, H231, and E261 each coordinate Zn(2+).

It belongs to the AP endonuclease 2 family. Zn(2+) is required as a cofactor.

It catalyses the reaction Endonucleolytic cleavage to 5'-phosphooligonucleotide end-products.. Functionally, endonuclease IV plays a role in DNA repair. It cleaves phosphodiester bonds at apurinic or apyrimidinic (AP) sites, generating a 3'-hydroxyl group and a 5'-terminal sugar phosphate. The chain is Probable endonuclease 4 from Campylobacter fetus subsp. fetus (strain 82-40).